A 346-amino-acid chain; its full sequence is uncharacterized protein (346 aa).

Belongs to the IIV-6 359L family.

This is an uncharacterized protein from Invertebrate iridescent virus 6 (IIV-6).